The following is a 92-amino-acid chain: C-C motif chemokine 3 (92 aa).

Positions 1–23 (MQVSTAALAVLLCTMALCNQFSA) are cleaved as a signal peptide. Intrachain disulfides connect C33-C57 and C34-C73.

Belongs to the intercrine beta (chemokine CC) family. As to quaternary structure, self-associates. Also heterodimer of MIP-1-alpha(4-69) and MIP-1-beta(3-69). Interacts with CCR1. Post-translationally, N-terminal processed form LD78-alpha(4-69) is produced by proteolytic cleavage after secretion from HTLV1-transformed T-cells.

The protein localises to the secreted. Its function is as follows. Monokine with inflammatory and chemokinetic properties. Binds to CCR1, CCR4 and CCR5. One of the major HIV-suppressive factors produced by CD8+ T-cells. Recombinant MIP-1-alpha induces a dose-dependent inhibition of different strains of HIV-1, HIV-2, and simian immunodeficiency virus (SIV). The polypeptide is C-C motif chemokine 3 (CCL3) (Homo sapiens (Human)).